A 155-amino-acid chain; its full sequence is Endoribonuclease YbeY (155 aa).

The Zn(2+) site is built by histidine 114, histidine 118, and histidine 124.

This sequence belongs to the endoribonuclease YbeY family. The cofactor is Zn(2+).

It localises to the cytoplasm. Its function is as follows. Single strand-specific metallo-endoribonuclease involved in late-stage 70S ribosome quality control and in maturation of the 3' terminus of the 16S rRNA. In Shigella dysenteriae serotype 1 (strain Sd197), this protein is Endoribonuclease YbeY.